A 507-amino-acid polypeptide reads, in one-letter code: Cytochrome P450 4A14 (507 aa).

The propeptide at 1-4 (MGFS) is removed in mature form. Heme is bound at residue Glu-318. At Ser-437 the chain carries Phosphoserine. Cys-454 contacts heme.

Belongs to the cytochrome P450 family. Heme is required as a cofactor.

The protein resides in the endoplasmic reticulum membrane. Its subcellular location is the microsome membrane. It catalyses the reaction an omega-methyl-long-chain fatty acid + reduced [NADPH--hemoprotein reductase] + O2 = an omega-hydroxy-long-chain fatty acid + oxidized [NADPH--hemoprotein reductase] + H2O + H(+). The catalysed reaction is dodecanoate + reduced [NADPH--hemoprotein reductase] + O2 = (11R)-hydroxydodecanoate + oxidized [NADPH--hemoprotein reductase] + H2O + H(+). It carries out the reaction dodecanoate + reduced [NADPH--hemoprotein reductase] + O2 = 12-hydroxydodecanoate + oxidized [NADPH--hemoprotein reductase] + H2O + H(+). The enzyme catalyses tetradecanoate + reduced [NADPH--hemoprotein reductase] + O2 = 14-hydroxytetradecanoate + oxidized [NADPH--hemoprotein reductase] + H2O + H(+). It participates in lipid metabolism; fatty acid metabolism. In terms of biological role, a cytochrome P450 monooxygenase that catalyzes omega and omega-1 hydroxylation of saturated fatty acids. Exhibits preferential omega versus omega-1 regioselectivity and (R) versus (S) stereoselectivity for hydroxylation of dodecanoic (lauric) acid. Mechanistically, uses molecular oxygen inserting one oxygen atom into a substrate, and reducing the second into a water molecule, with two electrons provided by NADPH via cytochrome P450 reductase (CPR; NADPH-ferrihemoprotein reductase). The sequence is that of Cytochrome P450 4A14 from Rattus norvegicus (Rat).